The following is a 358-amino-acid chain: Cholesterol galactosyltransferase (358 aa).

Belongs to the glycosyltransferase 2 family.

It catalyses the reaction cholesterol + UDP-alpha-D-galactose = cholesteryl 3-beta-D-galactoside + UDP + H(+). It participates in glycolipid biosynthesis. Its function is as follows. Galactosyltransferase involved in the synthesis of cholesterol glycolipids, which are formed by the use of host-derived cholesterol and have been shown to be immunogenic, and possibly contribute to Lyme disease pathogenesis. Catalyzes the formation of cholesteryl beta-D-galactopyranoside (CGal) from cholesterol and UDP-alpha-D-galactose. Cannot use GDP-mannose. This chain is Cholesterol galactosyltransferase, found in Borreliella burgdorferi (strain ATCC 35210 / DSM 4680 / CIP 102532 / B31) (Borrelia burgdorferi).